A 104-amino-acid polypeptide reads, in one-letter code: L-rhamnose mutarotase (104 aa).

Tyrosine 18 contacts substrate. Histidine 22 functions as the Proton donor in the catalytic mechanism. Substrate-binding positions include tyrosine 41 and 76 to 77; that span reads WW.

It belongs to the rhamnose mutarotase family. As to quaternary structure, homodimer.

The protein resides in the cytoplasm. The enzyme catalyses alpha-L-rhamnose = beta-L-rhamnose. It participates in carbohydrate metabolism; L-rhamnose metabolism. Involved in the anomeric conversion of L-rhamnose. This chain is L-rhamnose mutarotase, found in Lactiplantibacillus plantarum (strain ATCC BAA-793 / NCIMB 8826 / WCFS1) (Lactobacillus plantarum).